The primary structure comprises 209 residues: Thymidine kinase (209 aa).

ATP is bound by residues 25-32 (GCMFAGKT) and 103-106 (DEVQ). Glu104 functions as the Proton acceptor in the catalytic mechanism. The Zn(2+) site is built by Cys160, Cys163, Cys198, and Cys201.

It belongs to the thymidine kinase family. Homotetramer.

It localises to the cytoplasm. The catalysed reaction is thymidine + ATP = dTMP + ADP + H(+). This chain is Thymidine kinase, found in Mycoplasma capricolum subsp. capricolum (strain California kid / ATCC 27343 / NCTC 10154).